The sequence spans 501 residues: Glycerol kinase (501 aa).

Residue T12 coordinates ADP. The ATP site is built by T12, T13, and S14. T12 is a binding site for sn-glycerol 3-phosphate. Position 16 (R16) interacts with ADP. R82, E83, Y134, and D244 together coordinate sn-glycerol 3-phosphate. Positions 82, 83, 134, 244, and 245 each coordinate glycerol. 2 residues coordinate ADP: T266 and G310. Residues T266, G310, Q314, and G411 each contribute to the ATP site. Residues G411 and N415 each contribute to the ADP site.

Belongs to the FGGY kinase family.

It catalyses the reaction glycerol + ATP = sn-glycerol 3-phosphate + ADP + H(+). Its pathway is polyol metabolism; glycerol degradation via glycerol kinase pathway; sn-glycerol 3-phosphate from glycerol: step 1/1. Inhibited by fructose 1,6-bisphosphate (FBP). Functionally, key enzyme in the regulation of glycerol uptake and metabolism. Catalyzes the phosphorylation of glycerol to yield sn-glycerol 3-phosphate. In Methylobacterium radiotolerans (strain ATCC 27329 / DSM 1819 / JCM 2831 / NBRC 15690 / NCIMB 10815 / 0-1), this protein is Glycerol kinase.